The primary structure comprises 588 residues: Arginine--tRNA ligase (588 aa).

Positions 124–134 match the 'HIGH' region motif; that stretch reads PNVAKPMHVGH.

Belongs to the class-I aminoacyl-tRNA synthetase family. Monomer.

The protein resides in the cytoplasm. The enzyme catalyses tRNA(Arg) + L-arginine + ATP = L-arginyl-tRNA(Arg) + AMP + diphosphate. This is Arginine--tRNA ligase from Maricaulis maris (strain MCS10) (Caulobacter maris).